Consider the following 144-residue polypeptide: Large ribosomal subunit protein uL11 (144 aa).

Belongs to the universal ribosomal protein uL11 family. In terms of assembly, part of the ribosomal stalk of the 50S ribosomal subunit. Interacts with L10 and the large rRNA to form the base of the stalk. L10 forms an elongated spine to which L12 dimers bind in a sequential fashion forming a multimeric L10(L12)X complex. One or more lysine residues are methylated.

Functionally, forms part of the ribosomal stalk which helps the ribosome interact with GTP-bound translation factors. This is Large ribosomal subunit protein uL11 from Francisella tularensis subsp. holarctica (strain OSU18).